A 1128-amino-acid polypeptide reads, in one-letter code: Phytochrome A (1128 aa).

Low complexity predominate over residues 1–21 (MSSSRPTQCSSSSSRTRQSSR). The segment at 1–24 (MSSSRPTQCSSSSSRTRQSSRARI) is disordered. The GAF domain maps to 219-404 (SMEVLCNTVV…VFAVHVNKEF (186 aa)). Cys324 is a phytochromobilin binding site. PAS domains are found at residues 620-690 (VTSE…LQGK) and 750-834 (VEGD…LAGD). The 221-residue stretch at 904–1124 (YMRHAINNPL…TFILSVELAS (221 aa)) folds into the Histidine kinase domain.

This sequence belongs to the phytochrome family. Homodimer. Contains one covalently linked phytochromobilin chromophore.

In terms of biological role, regulatory photoreceptor which exists in two forms that are reversibly interconvertible by light: the Pr form that absorbs maximally in the red region of the spectrum and the Pfr form that absorbs maximally in the far-red region. Photoconversion of Pr to Pfr induces an array of morphogenic responses, whereas reconversion of Pfr to Pr cancels the induction of those responses. Pfr controls the expression of a number of nuclear genes including those encoding the small subunit of ribulose-bisphosphate carboxylase, chlorophyll A/B binding protein, protochlorophyllide reductase, rRNA, etc. It also controls the expression of its own gene(s) in a negative feedback fashion. In Oryza sativa subsp. indica (Rice), this protein is Phytochrome A (PHYA).